Reading from the N-terminus, the 425-residue chain is Kynureninase (425 aa).

Pyridoxal 5'-phosphate is bound by residues L105, T106, 133–136 (FPSD), D218, H221, and Y243. N6-(pyridoxal phosphate)lysine is present on K244. Pyridoxal 5'-phosphate contacts are provided by W274 and N302.

The protein belongs to the kynureninase family. In terms of assembly, homodimer. Pyridoxal 5'-phosphate serves as cofactor.

The enzyme catalyses L-kynurenine + H2O = anthranilate + L-alanine + H(+). It catalyses the reaction 3-hydroxy-L-kynurenine + H2O = 3-hydroxyanthranilate + L-alanine + H(+). Its pathway is amino-acid degradation; L-kynurenine degradation; L-alanine and anthranilate from L-kynurenine: step 1/1. It functions in the pathway cofactor biosynthesis; NAD(+) biosynthesis; quinolinate from L-kynurenine: step 2/3. Its function is as follows. Catalyzes the cleavage of L-kynurenine (L-Kyn) and L-3-hydroxykynurenine (L-3OHKyn) into anthranilic acid (AA) and 3-hydroxyanthranilic acid (3-OHAA), respectively. The protein is Kynureninase of Flavobacterium psychrophilum (strain ATCC 49511 / DSM 21280 / CIP 103535 / JIP02/86).